An 882-amino-acid polypeptide reads, in one-letter code: MPEIAQAHTPMMRQYLETKARYPDAILFFRLGDFYEMFFEDALTASEALQITLTARSKGDDKVPMCGVPYHAARGYVARLLEKGFKVAICDQVEEPGKSQLVKREVTRVVTPGMVLDDQVLDPREASWLGAVALEGGRAGLALLDASTGQLQCGEVDGDERLVDELRRAGVRELVFSSAADGARTEAIARAVGAPAARRDAAEFERAEDRLRKHLGVPSLDGFGVSGLPLGLSAAAAALAYLADTQRAAPRHVDRISRLSTDDVLLLDEATRTNLELERTLSGGRKKGTLLALLDRTVTAPGGRRLAEWLRYPLADLARIGARLDAVEELSGASVAREELAGALRPVADLERLLSRLVLGQGNARDLRALAGALLALPALADVLEARGAALLREAGGRLRGLEALAAHLDAAVAEEPPATLREGGFIRRGHSAELDEIVAISEDGKGWIAGLEAKERERTGIGSLKVRFNKVFGYYLEVTKPNLHLVPKDWERRQTTVGGERFVTPELKGFEEKVLTAEERRAALEERLFEALRQAVAAEAPRVRTAADAVATADALLSLARVAAERGYVRPEVDASEALEIVDGRHPVVEAVLPDGPAAYVPNDVLVASRGAPECAEHGALLVITGPNMAGKSTVMRQAALVVLLAQMGAFVPARRARIGLVDRIFTRVGASDDLARGRSTFMVEMTETAAILHNATRRSLVVLDEIGRGTSTFDGVSIAWAVAEHLHDVTGCRTLFATHYHELQDLARERPAVRNLTVAVREVGDRVVFLRKLVQGGASRSYGIEVAKLAGLPAEVLARAREILKNLEAMEVDEGGHPALARGRRRRAGPAAAQLGLFGGGAAADPAADEVAKAIRALDLDALRPLDALNLLAGWKRSLE.

627–634 (GPNMAGKS) serves as a coordination point for ATP.

The protein belongs to the DNA mismatch repair MutS family.

This protein is involved in the repair of mismatches in DNA. It is possible that it carries out the mismatch recognition step. This protein has a weak ATPase activity. The protein is DNA mismatch repair protein MutS of Anaeromyxobacter dehalogenans (strain 2CP-C).